The following is a 161-amino-acid chain: Allophycocyanin beta subunit (161 aa).

Asparagine 71 carries the N4-methylasparagine modification. Cysteine 81 is a (2R,3E)-phycocyanobilin binding site.

Belongs to the phycobiliprotein family. Heterodimer of an alpha and a beta chain. Post-translationally, contains one covalently linked phycocyanobilin chromophore. The chromophore is added by the phycocyanobilin lyase CpcUS.

It localises to the cellular thylakoid membrane. Its function is as follows. Light-harvesting photosynthetic bile pigment-protein from the phycobiliprotein complex. Allophycocyanin has a maximum absorption at approximately 650 nanometers. The sequence is that of Allophycocyanin beta subunit (apcB) from Picosynechococcus sp. (strain ATCC 27264 / PCC 7002 / PR-6) (Agmenellum quadruplicatum).